The primary structure comprises 387 residues: MKFLKSNPFLALANNYMIDAPEPSNISYFWNFGSLLACVLVVQIVTGILLACFYVASMDLAFASVERIGRDVNYGFLLRALHANGASFFFIFLYLHIGRGLYYGSYRAPRTMTWNIGVIIFLLTIITAFLGYCLPANQMSFWGATVITNLLSAVPFIGDDLVQLLWGGFSVSNPTLNRFFSLHYLMPFVIAALSIMHLIALHTNGSSNPLGVTANMDRLPMNPYFLIKDLITIFIFLLAINYMVFYNPYGFMEPDCALPADPLKTPMSIVPEWYLLPYYAILRAIPNFQLGVVAMLLSILVLLLLPLLDFSAIRGNQFNPMGKFFFWCFVADFCILAWIGGSHPENVFITIGAYATAFYFIYFFILIPVYTILGNTLIDLGLPRSNK.

A run of 4 helical transmembrane segments spans residues 32 to 52 (FGSLLACVLVVQIVTGILLAC), 76 to 98 (FLLRALHANGASFFFIFLYLHIG), 113 to 133 (TWNIGVIIFLLTIITAFLGYC), and 179 to 199 (FFSLHYLMPFVIAALSIMHLI). Residues His-82 and His-96 each coordinate heme b. The heme b site is built by His-183 and His-197. An a ubiquinone-binding site is contributed by His-202. 4 helical membrane passes run 225 to 245 (FLIKDLITIFIFLLAINYMVF), 289 to 309 (QLGVVAMLLSILVLLLLPLLD), 321 to 341 (MGKFFFWCFVADFCILAWIGG), and 348 to 368 (FITIGAYATAFYFIYFFILIP).

This sequence belongs to the cytochrome b family. As to quaternary structure, fungal cytochrome b-c1 complex contains 10 subunits; 3 respiratory subunits, 2 core proteins and 5 low-molecular weight proteins. Cytochrome b-c1 complex is a homodimer. It depends on heme b as a cofactor.

The protein resides in the mitochondrion inner membrane. Its function is as follows. Component of the ubiquinol-cytochrome c reductase complex (complex III or cytochrome b-c1 complex) that is part of the mitochondrial respiratory chain. The b-c1 complex mediates electron transfer from ubiquinol to cytochrome c. Contributes to the generation of a proton gradient across the mitochondrial membrane that is then used for ATP synthesis. This is Cytochrome b (cob) from Schizosaccharomyces octosporus (Fission yeast).